The chain runs to 155 residues: Putative methyl-CpG-binding domain protein 12 (155 aa).

The segment at 1–53 (MVQCTDCKKWRLIPSMQHYNIIKETQLQTPFVCGTTSGWTPNMSCNVPQDGTT) adopts a CW-type zinc-finger fold. Residues 3 to 45 (QCTDCKKWRLIPSMQHYNIIKETQLQTPFVCGTTSGWTPNMSC) carry the MBD-associated domain (MAD) motif. 4 residues coordinate Zn(2+): Cys-4, Cys-7, Cys-33, and Cys-45. Residues 53–126 (TCDTWPSIPP…SQFSFQIPKP (74 aa)) enclose the MBD domain. Residues 130–155 (NYVKKRTRPVKRRKSSKDNNCEKGKK) form a disordered region. Basic residues predominate over residues 133–144 (KKRTRPVKRRKS). The Nuclear localization signal motif lies at 140 to 147 (KRRKSSKD). Over residues 145-155 (SKDNNCEKGKK) the composition is skewed to basic and acidic residues.

It localises to the nucleus. Probable transcriptional regulator. This Arabidopsis thaliana (Mouse-ear cress) protein is Putative methyl-CpG-binding domain protein 12 (MBD12).